A 639-amino-acid polypeptide reads, in one-letter code: Protein P1 (639 aa).

The signal sequence occupies residues Met-1 to Ala-20. The next 3 helical transmembrane spans lie at Ala-121–Ala-141, Ile-144–Ile-164, and Ala-172–Trp-192. The Peptidase S39 domain maps to Val-207–Glu-399. Active-site for protease activity residues include His-255, Asp-286, and Ser-354. 2 disordered regions span residues Ala-455–Asp-515 and Val-539–Ala-639. The segment covering Thr-463–Leu-488 has biased composition (polar residues). Positions Gln-548–Lys-561 are enriched in basic residues. Residues Ser-566–Gly-577 are compositionally biased toward polar residues. The span at Ala-587–Pro-602 shows a compositional bias: low complexity.

Belongs to the peptidase S39B family. Post-translationally, specific enzymatic cleavages in vivo yield mature proteins. The protease probably cleaves itself and releases the VPg protein. The VPg protein is probably further cleaved in its C-terminus.

Its subcellular location is the membrane. Functionally, precursor from which the VPg molecule is probably released at the onset of the RNA synthesis. Essential for virus replication. Participates, together with the proteins P0 and P7, in the inhibition of the induction of aphid-induced host phytohormones. This could play a role in the attraction to the infected plants by aphids. This chain is Protein P1, found in Solanum tuberosum (Potato).